We begin with the raw amino-acid sequence, 625 residues long: Endoglucanase 13 (625 aa).

The first 34 residues, 1–34 (MAATMNKTPATTFLLIPAAASLVLLLAAAASVEA), serve as a signal peptide directing secretion. The active-site Nucleophile is the Asp-91. Residue His-427 is part of the active site. Asn-440 is a glycosylation site (N-linked (GlcNAc...) asparagine). Active-site residues include Asp-479 and Glu-488. The interval 509 to 530 (ADNTPEYTPAPNAPSPSNGGSP) is disordered.

This sequence belongs to the glycosyl hydrolase 9 (cellulase E) family.

The protein resides in the secreted. The enzyme catalyses Endohydrolysis of (1-&gt;4)-beta-D-glucosidic linkages in cellulose, lichenin and cereal beta-D-glucans.. The sequence is that of Endoglucanase 13 (GLU6) from Oryza sativa subsp. indica (Rice).